A 436-amino-acid chain; its full sequence is Transcription factor MYB124 (436 aa).

A compositionally biased stretch (basic residues) spans 1-11 (MEDTKKKKKKN). Positions 1–23 (MEDTKKKKKKNINNNQDSKKKER) are disordered. Residues 8 to 15 (KKKNINNN) carry the Nuclear localization signal 1 motif. HTH myb-type domains follow at residues 20 to 71 (KKER…YTYL) and 72 to 126 (NSDF…KKRA). DNA-binding regions (H-T-H motif) lie at residues 48–71 (WAIIASKFKDKSTRQCRRRWYTYL) and 99–122 (WTEIAKVVSGRTDNAVKNRFTTLC). Residues 151 to 158 (PRKSENET) carry the Nuclear localization signal 2 motif. Residues 309-328 (SWRQPDLHDSPASSEYSSGS) are disordered. Over residues 319-328 (PASSEYSSGS) the composition is skewed to polar residues.

Interacts with RBR1. As to expression, expressed in all shoot organs with higher levels in leaves, stems, flowers, siliques and floral buds. Also detected in roots tips.

The protein localises to the nucleus. Its function is as follows. Transcription factor that binds to DNA in promoters cis-regulatory element 5'-GGCGCGC-3' of cell cycle genes, including cyclins, cyclin-dependent kinases (CDKs), and components of the pre-replication complex. Binds to DNA in promoters cis-regulatory element 5'-AGCCG-3' of auxin regulated genes (e.g. PIN3 and PIN7). Together with FAMA and MYB88, ensures that stomata contain just two guard cells (GCs) by enforcing a single symmetric precursor cell division before stomatal maturity. Represses the expression of the mitosis-inducing factors CDKB1-1 and CDKA-1, specifically required for the last guard mother cells (GMC) symmetric divisions in the stomatal pathway. Represses CYCA2-3 in newly formed guard cells. Together with MYB88, regulates stomata spacing by restricting divisions late in the stomatal cell lineage thus limiting the number of GMC divisions. In collaboration with CDKB1-1 and CDKB1-2, restrict the G1/S transition and chloroplast and nuclear number during stomatal formation, and normally maintain fate and developmental progression throughout the stomatal cell lineage. Also involved in the shape regulation of pavement cells. Involved in sensing and/or transducing abiotic stress (e.g. drought and salt), probably via the positive regulation of NAC019. Regulates female reproduction being required for entry into megasporogenesis, probably via the regulation of cell cycle genes. Promotes histone H3K27me3 marks and represses stem cell gene expression. Required for lateral roots (LRs) initiation via the regulation of PIN3 expression in an auxin-dependent manner. Involved in responses to gravity stimulation in primary roots by regulating the transcription of PIN3 and PIN7 in gravity-sensing cells, thus modulating auxin asymmetric redistribution. The chain is Transcription factor MYB124 from Arabidopsis thaliana (Mouse-ear cress).